Reading from the N-terminus, the 175-residue chain is MSKVASAAGKAIDWASVASKLKLDAATASAIANFRSRHAQAVAKLGTLREQATTVDFATYRSVLANKEIVNRIESSMKSFKPVKIDLNSQLKAINAFEAKASEGAKKNVELVKAELQNLSATLKNIEQARPTEEITIEDMKQAVPEIEKIVETMVTKGKWVIPGYREKFGDLSIM.

Ser2 carries the N-acetylserine modification.

The protein belongs to the ATPase d subunit family.

The protein resides in the mitochondrion inner membrane. In terms of biological role, mitochondrial membrane ATP synthase (F(1)F(0) ATP synthase or Complex V) produces ATP from ADP in the presence of a proton gradient across the membrane which is generated by electron transport complexes of the respiratory chain. F-type ATPases consist of two structural domains, F(1) - containing the extramembraneous catalytic core, and F(0) - containing the membrane proton channel, linked together by a central stalk and a peripheral stalk. During catalysis, ATP synthesis in the catalytic domain of F(1) is coupled via a rotary mechanism of the central stalk subunits to proton translocation. Part of the complex F(0) domain and the peripheric stalk, which acts as a stator to hold the catalytic alpha(3)beta(3) subcomplex and subunit a/ATP6 static relative to the rotary elements. This chain is ATP synthase subunit d, mitochondrial (atp7), found in Schizosaccharomyces pombe (strain 972 / ATCC 24843) (Fission yeast).